A 160-amino-acid chain; its full sequence is uncharacterized protein (160 aa).

The helical transmembrane segment at Tyr137–Val157 threads the bilayer.

The protein resides in the host membrane. Its subcellular location is the virion. This is an uncharacterized protein from Acanthamoeba polyphaga mimivirus (APMV).